The chain runs to 243 residues: Eukaryotic translation initiation factor 4E-2 (243 aa).

Belongs to the eukaryotic initiation factor 4E family. As to quaternary structure, eIF4F is a multi-subunit complex, the composition of which varies with external and internal environmental conditions. It is composed of at least eIF4A, eIF4E and eIF4G. eIF4E is also known to interact with other partners.

Its function is as follows. Recognizes and binds the 7-methylguanosine-containing mRNA cap during an early step in the initiation of protein synthesis and facilitates ribosome binding by inducing the unwinding of the mRNAs secondary structures. In Schizosaccharomyces pombe (strain 972 / ATCC 24843) (Fission yeast), this protein is Eukaryotic translation initiation factor 4E-2 (tif452).